The following is a 602-amino-acid chain: Aspartate--tRNA(Asp/Asn) ligase (602 aa).

Residue Glu176 coordinates L-aspartate. Residues 200–203 (QQFK) are aspartate. 2 residues coordinate L-aspartate: Arg222 and His452. Residue 222 to 224 (RDE) participates in ATP binding. Glu490 lines the ATP pocket. Arg497 serves as a coordination point for L-aspartate. 542–545 (GIDR) lines the ATP pocket.

This sequence belongs to the class-II aminoacyl-tRNA synthetase family. Type 1 subfamily. In terms of assembly, homodimer.

It localises to the cytoplasm. It carries out the reaction tRNA(Asx) + L-aspartate + ATP = L-aspartyl-tRNA(Asx) + AMP + diphosphate. Aspartyl-tRNA synthetase with relaxed tRNA specificity since it is able to aspartylate not only its cognate tRNA(Asp) but also tRNA(Asn). Reaction proceeds in two steps: L-aspartate is first activated by ATP to form Asp-AMP and then transferred to the acceptor end of tRNA(Asp/Asn). The sequence is that of Aspartate--tRNA(Asp/Asn) ligase from Rickettsia akari (strain Hartford).